A 338-amino-acid polypeptide reads, in one-letter code: Ketol-acid reductoisomerase (NADP(+)) (338 aa).

Residues 1 to 181 (MKVFYDKDAD…GGGRAGIIET (181 aa)) form the KARI N-terminal Rossmann domain. NADP(+) is bound by residues 24–27 (YGSQ), Arg47, and Ser52. The active site involves His107. Gly133 provides a ligand contact to NADP(+). One can recognise a KARI C-terminal knotted domain in the interval 182–327 (NFREETETDL…AKLRAMMPWI (146 aa)). Residues Asp190, Glu194, Glu226, and Glu230 each coordinate Mg(2+). A substrate-binding site is contributed by Ser251.

It belongs to the ketol-acid reductoisomerase family. Mg(2+) serves as cofactor.

It catalyses the reaction (2R)-2,3-dihydroxy-3-methylbutanoate + NADP(+) = (2S)-2-acetolactate + NADPH + H(+). The catalysed reaction is (2R,3R)-2,3-dihydroxy-3-methylpentanoate + NADP(+) = (S)-2-ethyl-2-hydroxy-3-oxobutanoate + NADPH + H(+). It functions in the pathway amino-acid biosynthesis; L-isoleucine biosynthesis; L-isoleucine from 2-oxobutanoate: step 2/4. Its pathway is amino-acid biosynthesis; L-valine biosynthesis; L-valine from pyruvate: step 2/4. Its function is as follows. Involved in the biosynthesis of branched-chain amino acids (BCAA). Catalyzes an alkyl-migration followed by a ketol-acid reduction of (S)-2-acetolactate (S2AL) to yield (R)-2,3-dihydroxy-isovalerate. In the isomerase reaction, S2AL is rearranged via a Mg-dependent methyl migration to produce 3-hydroxy-3-methyl-2-ketobutyrate (HMKB). In the reductase reaction, this 2-ketoacid undergoes a metal-dependent reduction by NADPH to yield (R)-2,3-dihydroxy-isovalerate. This is Ketol-acid reductoisomerase (NADP(+)) from Polynucleobacter necessarius subsp. necessarius (strain STIR1).